The sequence spans 484 residues: Glutamyl-tRNA(Gln) amidotransferase subunit A (484 aa).

Catalysis depends on charge relay system residues Lys76 and Ser151. Catalysis depends on Ser175, which acts as the Acyl-ester intermediate.

It belongs to the amidase family. GatA subfamily. In terms of assembly, heterotrimer of A, B and C subunits.

It carries out the reaction L-glutamyl-tRNA(Gln) + L-glutamine + ATP + H2O = L-glutaminyl-tRNA(Gln) + L-glutamate + ADP + phosphate + H(+). In terms of biological role, allows the formation of correctly charged Gln-tRNA(Gln) through the transamidation of misacylated Glu-tRNA(Gln) in organisms which lack glutaminyl-tRNA synthetase. The reaction takes place in the presence of glutamine and ATP through an activated gamma-phospho-Glu-tRNA(Gln). The sequence is that of Glutamyl-tRNA(Gln) amidotransferase subunit A from Alkalilimnicola ehrlichii (strain ATCC BAA-1101 / DSM 17681 / MLHE-1).